Reading from the N-terminus, the 366-residue chain is MNLAAMDPQTYDAQLEHKRIKLEQAFAQFETPSVEVFASEPANYRMRAEFRMWHDGDDLYYYMFDKVLNEKVRCDQYLPASVLINQMMSALIAELKPNPSLRHKLFQVDFLSTLSGEILVSLLYHRQLDDQWRTNAAALKAKLSSQFNVNIIGRARKQKIDLDKDFVVESLQVNDKTFLYKQIENSFTQPNAKVAVKMLEWAIDVTQDSQGDLLELYCGNGNFSIALAQNFNRVLATELAKPSVEAAQYNIEANGIKNLQIIRMSAEDFSDAMAKKRSFRRLEGIDLDSYVCNTIFVDPPRAGIDPDTLALVQGYERILYISCNPDTLKDNLEQLYKTHRVTQFALFDQFPYTDHMETGVLLERTQ.

Gln-189, Tyr-217, Asn-222, Glu-238, and Asp-298 together coordinate S-adenosyl-L-methionine. The Nucleophile role is filled by Cys-323. Glu-357 serves as the catalytic Proton acceptor.

It belongs to the class I-like SAM-binding methyltransferase superfamily. RNA M5U methyltransferase family. TrmA subfamily.

It catalyses the reaction uridine(54) in tRNA + S-adenosyl-L-methionine = 5-methyluridine(54) in tRNA + S-adenosyl-L-homocysteine + H(+). The enzyme catalyses uridine(341) in tmRNA + S-adenosyl-L-methionine = 5-methyluridine(341) in tmRNA + S-adenosyl-L-homocysteine + H(+). In terms of biological role, dual-specificity methyltransferase that catalyzes the formation of 5-methyluridine at position 54 (m5U54) in all tRNAs, and that of position 341 (m5U341) in tmRNA (transfer-mRNA). This Shewanella putrefaciens (strain CN-32 / ATCC BAA-453) protein is tRNA/tmRNA (uracil-C(5))-methyltransferase.